A 209-amino-acid polypeptide reads, in one-letter code: Glycerol-3-phosphate acyltransferase (209 aa).

A run of 5 helical transmembrane segments spans residues 13 to 33, 63 to 83, 94 to 114, 127 to 147, and 151 to 171; these read ALIA…GLLL, LAAA…LIAQ, PGLL…WLGF, LLGI…SIAF, and YSSL…WILG.

The protein belongs to the PlsY family. Probably interacts with PlsX.

The protein resides in the cell inner membrane. It catalyses the reaction an acyl phosphate + sn-glycerol 3-phosphate = a 1-acyl-sn-glycero-3-phosphate + phosphate. The protein operates within lipid metabolism; phospholipid metabolism. Functionally, catalyzes the transfer of an acyl group from acyl-phosphate (acyl-PO(4)) to glycerol-3-phosphate (G3P) to form lysophosphatidic acid (LPA). This enzyme utilizes acyl-phosphate as fatty acyl donor, but not acyl-CoA or acyl-ACP. The chain is Glycerol-3-phosphate acyltransferase from Allorhizobium ampelinum (strain ATCC BAA-846 / DSM 112012 / S4) (Agrobacterium vitis (strain S4)).